The primary structure comprises 66 residues: Potassium channel toxin alpha-KTx 30.3 (66 aa).

The signal sequence occupies residues 1–24 (MNKTFFLVVIMATVLVLAFDATDA). 3 cysteine pairs are disulfide-bonded: Cys-30-Cys-50, Cys-36-Cys-55, and Cys-40-Cys-57.

This sequence belongs to the short scorpion toxin superfamily. Potassium channel inhibitor family. Alpha-KTx 30 subfamily. As to expression, expressed by the venom gland.

The protein resides in the secreted. Inhibits Kv1.3/KCNA3 channel. The chain is Potassium channel toxin alpha-KTx 30.3 from Scorpiops jendeki (Scorpion).